A 2260-amino-acid polypeptide reads, in one-letter code: Reducing polyketide synthase pksF (2260 aa).

The Ketosynthase family 3 (KS3) domain occupies valine 20–aspartate 445. Active-site for beta-ketoacyl synthase activity residues include cysteine 194, histidine 329, and histidine 368. Residues phenylalanine 598 to glycine 933 are malonyl-CoA:ACP transacylase (MAT) domain. Serine 689 serves as the catalytic For malonyltransferase activity. Positions histidine 984–arginine 1121 are N-terminal hotdog fold. The tract at residues histidine 984–alanine 1281 is dehydratase (DH) domain. In terms of domain architecture, PKS/mFAS DH spans histidine 984–serine 1306. Catalysis depends on histidine 1016, which acts as the Proton acceptor; for dehydratase activity. A C-terminal hotdog fold region spans residues arginine 1150 to serine 1306. The active-site Proton donor; for dehydratase activity is aspartate 1216. The tract at residues glycine 1544–isoleucine 1859 is enoylreductase (ER) domain. Positions proline 1882–valine 2104 are ketoreductase (KR) domain. The Carrier domain occupies glutamine 2174–serine 2251. The residue at position 2211 (serine 2211) is an O-(pantetheine 4'-phosphoryl)serine.

Pantetheine 4'-phosphate serves as cofactor.

Reducing polyketide synthase that catalyzes the formation of a C22 intermediate attached to the ACP. Release by intramolecular hydrolysis by the enolized delta-carbonyl would give the pyrone product aslanipyrone. Alternatively, KR-mediated reduction of the beta-carbonyl of the C22 intermediate would form a beta-hydroxy thioester intermediate, which could be a substrate for a further KS-mediated condensation of an additional C2 unit to form a C24 intermediate, which cyclizes by aldol condensation followed by decarboxylation to form aslaniol. Neither aslanipyrone, aslaniol, nor their derivatives have been detected in A.solani, probably due to a low abundance and/or extensive post-PKS modification. It is assumed that the branching point from C22 to C24 is the result of KR activity on the C22 intermediate anchored to the ACP. The sequence is that of Reducing polyketide synthase pksF from Alternaria solani.